The primary structure comprises 303 residues: Ribosomal protein L11 methyltransferase (303 aa).

The S-adenosyl-L-methionine site is built by Thr-144, Gly-165, Asp-187, and Asn-235.

This sequence belongs to the methyltransferase superfamily. PrmA family.

The protein resides in the cytoplasm. The catalysed reaction is L-lysyl-[protein] + 3 S-adenosyl-L-methionine = N(6),N(6),N(6)-trimethyl-L-lysyl-[protein] + 3 S-adenosyl-L-homocysteine + 3 H(+). Methylates ribosomal protein L11. In Prochlorococcus marinus (strain AS9601), this protein is Ribosomal protein L11 methyltransferase.